We begin with the raw amino-acid sequence, 128 residues long: Ribonuclease P protein component (128 aa).

It belongs to the RnpA family. Consists of a catalytic RNA component (M1 or rnpB) and a protein subunit.

The enzyme catalyses Endonucleolytic cleavage of RNA, removing 5'-extranucleotides from tRNA precursor.. In terms of biological role, RNaseP catalyzes the removal of the 5'-leader sequence from pre-tRNA to produce the mature 5'-terminus. It can also cleave other RNA substrates such as 4.5S RNA. The protein component plays an auxiliary but essential role in vivo by binding to the 5'-leader sequence and broadening the substrate specificity of the ribozyme. In Chromohalobacter salexigens (strain ATCC BAA-138 / DSM 3043 / CIP 106854 / NCIMB 13768 / 1H11), this protein is Ribonuclease P protein component.